A 306-amino-acid polypeptide reads, in one-letter code: Palmitoyl-protein thioesterase 1 (306 aa).

Residues 1–27 form the signal peptide; it reads MASPGCLWLLAVALLPWTCASRALQHL. C6 is lipidated: S-palmitoyl cysteine; by ZDHHC3 and ZDHHC7. 3 disulfides stabilise this stretch: C45–C46, C96–C128, and C152–C160. S115 is an active-site residue. N-linked (GlcNAc...) asparagine glycosylation is found at N197, N212, and N232. Active-site residues include D233 and H289.

The protein belongs to the palmitoyl-protein thioesterase family. As to quaternary structure, interacts with CLN5. Interacts with ATP5F1A and ATP5F1B. Glycosylated.

The protein resides in the lysosome. It is found in the secreted. Its subcellular location is the golgi apparatus. It localises to the endoplasmic reticulum. The catalysed reaction is S-hexadecanoyl-L-cysteinyl-[protein] + H2O = L-cysteinyl-[protein] + hexadecanoate + H(+). The enzyme catalyses hexadecanoyl-CoA + H2O = hexadecanoate + CoA + H(+). It catalyses the reaction S-hexadecanoyl-N-acetylcysteamine + H2O = N-acetylcysteamine + hexadecanoate + H(+). It carries out the reaction S-hexadecanoyl-N-acetylcysteine methyl ester + H2O = N-acetylcysteine methyl ester + hexadecanoate + H(+). Its activity is regulated as follows. Palmitoylation reduces PPT1 enzymatic activity. Has thioesterase activity against fatty acid thioesters with 14 -18 carbons, including palmitoyl-CoA, S-palmitoyl-N-acetylcysteamine, and palmitoylated proteins. In contrast to PPT2, PPT1 can hydrolyze palmitoylated proteins and palmitoylcysteine. This chain is Palmitoyl-protein thioesterase 1 (PPT1), found in Homo sapiens (Human).